A 265-amino-acid chain; its full sequence is Undecaprenyl-diphosphatase (265 aa).

A run of 8 helical transmembrane segments spans residues 1 to 21 (MDIF…FLPI), 39 to 59 (QGVG…VLYF), 84 to 104 (ALAW…LALL), 114 to 134 (ASVI…ADWL), 144 to 164 (LNWK…VPGT), 187 to 207 (FSFL…LLEV), 218 to 238 (GFLI…HFFL), and 244 to 264 (VGMW…YAVL).

It belongs to the UppP family.

It is found in the cell inner membrane. The enzyme catalyses di-trans,octa-cis-undecaprenyl diphosphate + H2O = di-trans,octa-cis-undecaprenyl phosphate + phosphate + H(+). In terms of biological role, catalyzes the dephosphorylation of undecaprenyl diphosphate (UPP). Confers resistance to bacitracin. The polypeptide is Undecaprenyl-diphosphatase (Marinobacter nauticus (strain ATCC 700491 / DSM 11845 / VT8) (Marinobacter aquaeolei)).